The primary structure comprises 364 residues: UDP-N-acetylglucosamine--N-acetylmuramyl-(pentapeptide) pyrophosphoryl-undecaprenol N-acetylglucosamine transferase (364 aa).

Residues 10 to 12, asparagine 128, arginine 170, serine 199, isoleucine 250, and glutamine 295 each bind UDP-N-acetyl-alpha-D-glucosamine; that span reads TGG.

Belongs to the glycosyltransferase 28 family. MurG subfamily.

It is found in the cell inner membrane. The catalysed reaction is di-trans,octa-cis-undecaprenyl diphospho-N-acetyl-alpha-D-muramoyl-L-alanyl-D-glutamyl-meso-2,6-diaminopimeloyl-D-alanyl-D-alanine + UDP-N-acetyl-alpha-D-glucosamine = di-trans,octa-cis-undecaprenyl diphospho-[N-acetyl-alpha-D-glucosaminyl-(1-&gt;4)]-N-acetyl-alpha-D-muramoyl-L-alanyl-D-glutamyl-meso-2,6-diaminopimeloyl-D-alanyl-D-alanine + UDP + H(+). It functions in the pathway cell wall biogenesis; peptidoglycan biosynthesis. Functionally, cell wall formation. Catalyzes the transfer of a GlcNAc subunit on undecaprenyl-pyrophosphoryl-MurNAc-pentapeptide (lipid intermediate I) to form undecaprenyl-pyrophosphoryl-MurNAc-(pentapeptide)GlcNAc (lipid intermediate II). This chain is UDP-N-acetylglucosamine--N-acetylmuramyl-(pentapeptide) pyrophosphoryl-undecaprenol N-acetylglucosamine transferase, found in Chlorobaculum tepidum (strain ATCC 49652 / DSM 12025 / NBRC 103806 / TLS) (Chlorobium tepidum).